The chain runs to 66 residues: MKINKYVEDLKAKSAAELNEELVAAKKELFNLRFQNATNQLDNTSRIKEVRKNIARIQTVIAQKNA.

Belongs to the universal ribosomal protein uL29 family.

The sequence is that of Large ribosomal subunit protein uL29 from Lachnospira eligens (strain ATCC 27750 / DSM 3376 / VPI C15-48 / C15-B4) (Eubacterium eligens).